A 243-amino-acid polypeptide reads, in one-letter code: Ribosomal RNA small subunit methyltransferase J (243 aa).

S-adenosyl-L-methionine is bound by residues 112 to 113 (ER) and aspartate 164.

It belongs to the methyltransferase superfamily. RsmJ family.

It is found in the cytoplasm. The enzyme catalyses guanosine(1516) in 16S rRNA + S-adenosyl-L-methionine = N(2)-methylguanosine(1516) in 16S rRNA + S-adenosyl-L-homocysteine + H(+). Specifically methylates the guanosine in position 1516 of 16S rRNA. The protein is Ribosomal RNA small subunit methyltransferase J of Legionella pneumophila subsp. pneumophila (strain Philadelphia 1 / ATCC 33152 / DSM 7513).